The primary structure comprises 355 residues: NADH-quinone oxidoreductase subunit H (355 aa).

The next 8 helical transmembrane spans lie at 25–45 (LVRILVVAVVILLCVAYLILW), 91–111 (WLYLVAPVMTVVPAFAVWAVI), 126–146 (LLYAMAISSIGVYAVILAGWA), 170–190 (MGFALVLVLMTAGSLNLSEIV), 205–225 (FLSWNWLPLLPAFVVYFVSGI), 253–273 (MAFALFFLAEYINMIVISALA), 290–310 (FIPGIFWLVLKVFALLSVFIW), and 330–350 (VFLPVTVIWVVVVGFWMMSPL).

Belongs to the complex I subunit 1 family. As to quaternary structure, NDH-1 is composed of 14 different subunits. Subunits NuoA, H, J, K, L, M, N constitute the membrane sector of the complex.

Its subcellular location is the cell inner membrane. The catalysed reaction is a quinone + NADH + 5 H(+)(in) = a quinol + NAD(+) + 4 H(+)(out). In terms of biological role, NDH-1 shuttles electrons from NADH, via FMN and iron-sulfur (Fe-S) centers, to quinones in the respiratory chain. The immediate electron acceptor for the enzyme in this species is believed to be ubiquinone. Couples the redox reaction to proton translocation (for every two electrons transferred, four hydrogen ions are translocated across the cytoplasmic membrane), and thus conserves the redox energy in a proton gradient. This subunit may bind ubiquinone. This is NADH-quinone oxidoreductase subunit H from Burkholderia vietnamiensis (strain G4 / LMG 22486) (Burkholderia cepacia (strain R1808)).